Reading from the N-terminus, the 144-residue chain is Large ribosomal subunit protein uL16 (144 aa).

Residues 1 to 16 (MLIPKRVKYRKQHRGR) are compositionally biased toward basic residues. A disordered region spans residues 1-23 (MLIPKRVKYRKQHRGRPGGGMAK).

It belongs to the universal ribosomal protein uL16 family. Part of the 50S ribosomal subunit.

Its function is as follows. Binds 23S rRNA and is also seen to make contacts with the A and possibly P site tRNAs. In Pelotomaculum thermopropionicum (strain DSM 13744 / JCM 10971 / SI), this protein is Large ribosomal subunit protein uL16.